Consider the following 132-residue polypeptide: MKGFGSKVIRSLPNGARLICADNTGAKELEIIAVKGYKGVARRLPAGGVGSLVFVSVKKGTPEMRKQVLPAIIIRQKKEYRRPDGSRVKFEDNAAVIVTPEGSPKGSEIKGPVAKEAAERWAGVSRLAKIIH.

The protein belongs to the universal ribosomal protein uL14 family. Part of the 50S ribosomal subunit. Forms a cluster with proteins L3 and L24e, part of which may contact the 16S rRNA in 2 intersubunit bridges.

Binds to 23S rRNA. Forms part of two intersubunit bridges in the 70S ribosome. The polypeptide is Large ribosomal subunit protein uL14 (Methanococcus aeolicus (strain ATCC BAA-1280 / DSM 17508 / OCM 812 / Nankai-3)).